The chain runs to 376 residues: UDP-N-acetylglucosamine--N-acetylmuramyl-(pentapeptide) pyrophosphoryl-undecaprenol N-acetylglucosamine transferase (376 aa).

UDP-N-acetyl-alpha-D-glucosamine is bound by residues 12 to 14 (TAG), Asn-126, Arg-163, Ser-198, and Gln-296.

This sequence belongs to the glycosyltransferase 28 family. MurG subfamily.

The protein resides in the cell membrane. The catalysed reaction is di-trans,octa-cis-undecaprenyl diphospho-N-acetyl-alpha-D-muramoyl-L-alanyl-D-glutamyl-meso-2,6-diaminopimeloyl-D-alanyl-D-alanine + UDP-N-acetyl-alpha-D-glucosamine = di-trans,octa-cis-undecaprenyl diphospho-[N-acetyl-alpha-D-glucosaminyl-(1-&gt;4)]-N-acetyl-alpha-D-muramoyl-L-alanyl-D-glutamyl-meso-2,6-diaminopimeloyl-D-alanyl-D-alanine + UDP + H(+). Its pathway is cell wall biogenesis; peptidoglycan biosynthesis. Cell wall formation. Catalyzes the transfer of a GlcNAc subunit on undecaprenyl-pyrophosphoryl-MurNAc-pentapeptide (lipid intermediate I) to form undecaprenyl-pyrophosphoryl-MurNAc-(pentapeptide)GlcNAc (lipid intermediate II). In Frankia casuarinae (strain DSM 45818 / CECT 9043 / HFP020203 / CcI3), this protein is UDP-N-acetylglucosamine--N-acetylmuramyl-(pentapeptide) pyrophosphoryl-undecaprenol N-acetylglucosamine transferase.